The sequence spans 285 residues: Thrombin-like enzyme TLBm (285 aa).

The Peptidase S1 domain maps to 1-273 (VIGGDECNIN…HLDWSQSVIA (273 aa)). 6 disulfides stabilise this stretch: cysteine 7–cysteine 181, cysteine 30–cysteine 46, cysteine 94–cysteine 284, cysteine 156–cysteine 234, cysteine 192–cysteine 209, and cysteine 224–cysteine 249. Active-site charge relay system residues include histidine 45 and aspartate 113. Serine 228 functions as the Charge relay system in the catalytic mechanism.

This sequence belongs to the peptidase S1 family. Snake venom subfamily. Monomer. Homologous thrombin-like enzymes are N-glycosylated. This enzyme does not contain the consensus glycosylation sites, suggesting it is not glycosylated. Expressed by the venom gland.

Its subcellular location is the secreted. Inhibited by PMSF, disodium-EDTA, S(Dm) and soybean trypsin inhibitor (SBTI). SBTI and S(Dm) (the anti-hemorrhagic protein) acts as a non-competitive inhibitors that decrease the enzymatic activity. Thrombin-like enzyme that induces the formation of fibrin clot. Cleaves the Aalpha-chain of fibrinogen (FGA) with higher activity than the Bbeta-chain (FGB). Induces platelet aggregation in both platelet-rich plasma and in washed platelet preparations. This aggregation is strongly inhibited by preincubation of the enzyme with PMSF. In Bothrops marajoensis (Marajo lancehead), this protein is Thrombin-like enzyme TLBm.